Consider the following 68-residue polypeptide: MAFEDVWKKISWLYYQYILVTALYMLEPWERAIFNSILISVAGMAVYTGYVFMPQHIMAILQYFEMVQ.

Residues 1-9 (MAFEDVWKK) lie on the Cytoplasmic side of the membrane. The chain crosses the membrane as a helical span at residues 10-26 (ISWLYYQYILVTALYML). At 27–31 (EPWER) the chain is on the lumenal side. Residues 32–54 (AIFNSILISVAGMAVYTGYVFMP) form a helical membrane-spanning segment. Over 55 to 68 (QHIMAILQYFEMVQ) the chain is Cytoplasmic.

This sequence belongs to the SPTSS family. SPTSSA subfamily. As to quaternary structure, component of the serine palmitoyltransferase (SPT) complex, which is composed of SPTLC1, SPTLC2 or SPTLC3 and SPTSSA or SPTSSB. The heterodimer consisting of SPTLC1 and SPTLC2/SPTLC3 forms the catalytic core of the enzyme, while SPTSSA or SPTSSB subunits determine substrate specificity. SPT also interacts with ORMDL proteins, especially ORMDL3, which negatively regulate SPT activity in the presence of ceramides.

Its subcellular location is the endoplasmic reticulum membrane. It functions in the pathway lipid metabolism; sphingolipid metabolism. Component of the serine palmitoyltransferase multisubunit enzyme (SPT) that catalyzes the initial and rate-limiting step in sphingolipid biosynthesis by condensing L-serine and activated acyl-CoA (most commonly palmitoyl-CoA) to form long-chain bases. The SPT complex is composed of SPTLC1, SPTLC2 or SPTLC3 and SPTSSA or SPTSSB. Within this complex, the heterodimer consisting of SPTLC1 and SPTLC2/SPTLC3 forms the catalytic core. Within the SPT complex, SPTSSA stimulates the catalytic activity and plays a role in substrate specificity, which depends upon the overall complex composition. The SPTLC1-SPTLC2-SPTSSA complex shows a strong preference for C16-CoA substrate, while the SPTLC1-SPTLC3-SPTSSA isozyme uses both C14-CoA and C16-CoA as substrates, with a slight preference for C14-CoA. Independently of its action as a SPT component, may be involved in MBOAT7 localization to mitochondria-associated membranes, a membrane bridge between the endoplasmic reticulum and mitochondria, may hence affect MBOAT7-catalyzed incorporation of arachidonic acid into phosphatidylinositol. The polypeptide is Serine palmitoyltransferase small subunit A (sptssa) (Salmo salar (Atlantic salmon)).